A 577-amino-acid polypeptide reads, in one-letter code: Arginine--tRNA ligase (577 aa).

A 'HIGH' region motif is present at residues 122–132 (PNVAKEMHVGH).

Belongs to the class-I aminoacyl-tRNA synthetase family. In terms of assembly, monomer.

It is found in the cytoplasm. It carries out the reaction tRNA(Arg) + L-arginine + ATP = L-arginyl-tRNA(Arg) + AMP + diphosphate. The sequence is that of Arginine--tRNA ligase from Escherichia coli O157:H7 (strain EC4115 / EHEC).